The primary structure comprises 226 residues: Glutathione S-transferase kappa 1 (226 aa).

16-18 (SPY) contacts glutathione. An N6-succinyllysine modification is found at Lys49. Asn53 is a glutathione binding site. Lys71 and Lys85 each carry N6-acetyllysine. An N6-acetyllysine; alternate modification is found at Lys116. The residue at position 116 (Lys116) is an N6-succinyllysine; alternate. The residue at position 144 (Lys144) is an N6-succinyllysine. Residue Lys158 is modified to N6-acetyllysine; alternate. Position 158 is an N6-succinyllysine; alternate (Lys158). 2 positions are modified to N6-acetyllysine: Lys165 and Lys169. Residues Leu183 and 200–201 (SD) each bind glutathione.

This sequence belongs to the GST superfamily. Kappa family. As to quaternary structure, homodimer. Ubiquitous.

It localises to the peroxisome. It carries out the reaction RX + glutathione = an S-substituted glutathione + a halide anion + H(+). Functionally, glutathione S-transferase that catalyzes the conjugation of glutathione to exogenous and endogenous compounds. Significant glutathione conjugating activity is found only with the model substrate, 1-chloro-2,4-dinitrobenzene (CDNB). The chain is Glutathione S-transferase kappa 1 (GSTK1) from Homo sapiens (Human).